A 428-amino-acid polypeptide reads, in one-letter code: Phosphoribosylamine--glycine ligase (428 aa).

The 208-residue stretch at 109–316 (KDFLARHNIP…LVELCLAGTQ (208 aa)) folds into the ATP-grasp domain. Residue 135–196 (VRQKGAPIVI…EEFLDGEEAS (62 aa)) coordinates ATP. Mg(2+) is bound by residues glutamate 286 and asparagine 288.

Belongs to the GARS family. The cofactor is Mg(2+). It depends on Mn(2+) as a cofactor.

The catalysed reaction is 5-phospho-beta-D-ribosylamine + glycine + ATP = N(1)-(5-phospho-beta-D-ribosyl)glycinamide + ADP + phosphate + H(+). The protein operates within purine metabolism; IMP biosynthesis via de novo pathway; N(1)-(5-phospho-D-ribosyl)glycinamide from 5-phospho-alpha-D-ribose 1-diphosphate: step 2/2. This chain is Phosphoribosylamine--glycine ligase, found in Yersinia pestis.